The primary structure comprises 212 residues: Imidazole glycerol phosphate synthase subunit HisH (212 aa).

The 210-residue stretch at 3–212 (DIAIVDYGMG…LGNFVRWKPV (210 aa)) folds into the Glutamine amidotransferase type-1 domain. The active-site Nucleophile is the cysteine 82. Active-site residues include histidine 191 and glutamate 193.

In terms of assembly, heterodimer of HisH and HisF.

Its subcellular location is the cytoplasm. The enzyme catalyses 5-[(5-phospho-1-deoxy-D-ribulos-1-ylimino)methylamino]-1-(5-phospho-beta-D-ribosyl)imidazole-4-carboxamide + L-glutamine = D-erythro-1-(imidazol-4-yl)glycerol 3-phosphate + 5-amino-1-(5-phospho-beta-D-ribosyl)imidazole-4-carboxamide + L-glutamate + H(+). The catalysed reaction is L-glutamine + H2O = L-glutamate + NH4(+). The protein operates within amino-acid biosynthesis; L-histidine biosynthesis; L-histidine from 5-phospho-alpha-D-ribose 1-diphosphate: step 5/9. In terms of biological role, IGPS catalyzes the conversion of PRFAR and glutamine to IGP, AICAR and glutamate. The HisH subunit catalyzes the hydrolysis of glutamine to glutamate and ammonia as part of the synthesis of IGP and AICAR. The resulting ammonia molecule is channeled to the active site of HisF. The polypeptide is Imidazole glycerol phosphate synthase subunit HisH (Nitrosospira multiformis (strain ATCC 25196 / NCIMB 11849 / C 71)).